Consider the following 315-residue polypeptide: 4-hydroxy-3-methylbut-2-enyl diphosphate reductase (315 aa).

Position 12 (cysteine 12) interacts with [4Fe-4S] cluster. The (2E)-4-hydroxy-3-methylbut-2-enyl diphosphate site is built by histidine 43 and histidine 81. Histidine 43 and histidine 81 together coordinate dimethylallyl diphosphate. Isopentenyl diphosphate is bound by residues histidine 43 and histidine 81. Position 103 (cysteine 103) interacts with [4Fe-4S] cluster. Histidine 131 is a (2E)-4-hydroxy-3-methylbut-2-enyl diphosphate binding site. Position 131 (histidine 131) interacts with dimethylallyl diphosphate. Histidine 131 contacts isopentenyl diphosphate. The Proton donor role is filled by glutamate 133. A (2E)-4-hydroxy-3-methylbut-2-enyl diphosphate-binding site is contributed by threonine 172. Cysteine 200 lines the [4Fe-4S] cluster pocket. 3 residues coordinate (2E)-4-hydroxy-3-methylbut-2-enyl diphosphate: serine 228, asparagine 230, and serine 273. Serine 228, asparagine 230, and serine 273 together coordinate dimethylallyl diphosphate. Isopentenyl diphosphate-binding residues include serine 228, asparagine 230, and serine 273.

This sequence belongs to the IspH family. It depends on [4Fe-4S] cluster as a cofactor.

The catalysed reaction is isopentenyl diphosphate + 2 oxidized [2Fe-2S]-[ferredoxin] + H2O = (2E)-4-hydroxy-3-methylbut-2-enyl diphosphate + 2 reduced [2Fe-2S]-[ferredoxin] + 2 H(+). It carries out the reaction dimethylallyl diphosphate + 2 oxidized [2Fe-2S]-[ferredoxin] + H2O = (2E)-4-hydroxy-3-methylbut-2-enyl diphosphate + 2 reduced [2Fe-2S]-[ferredoxin] + 2 H(+). The protein operates within isoprenoid biosynthesis; dimethylallyl diphosphate biosynthesis; dimethylallyl diphosphate from (2E)-4-hydroxy-3-methylbutenyl diphosphate: step 1/1. It participates in isoprenoid biosynthesis; isopentenyl diphosphate biosynthesis via DXP pathway; isopentenyl diphosphate from 1-deoxy-D-xylulose 5-phosphate: step 6/6. Functionally, catalyzes the conversion of 1-hydroxy-2-methyl-2-(E)-butenyl 4-diphosphate (HMBPP) into a mixture of isopentenyl diphosphate (IPP) and dimethylallyl diphosphate (DMAPP). Acts in the terminal step of the DOXP/MEP pathway for isoprenoid precursor biosynthesis. The polypeptide is 4-hydroxy-3-methylbut-2-enyl diphosphate reductase (Exiguobacterium sibiricum (strain DSM 17290 / CCUG 55495 / CIP 109462 / JCM 13490 / 255-15)).